Reading from the N-terminus, the 314-residue chain is Ribosomal protein L11 methyltransferase (314 aa).

S-adenosyl-L-methionine contacts are provided by Thr-164, Gly-185, Asp-207, and Asn-249.

This sequence belongs to the methyltransferase superfamily. PrmA family.

The protein resides in the cytoplasm. The enzyme catalyses L-lysyl-[protein] + 3 S-adenosyl-L-methionine = N(6),N(6),N(6)-trimethyl-L-lysyl-[protein] + 3 S-adenosyl-L-homocysteine + 3 H(+). In terms of biological role, methylates ribosomal protein L11. The sequence is that of Ribosomal protein L11 methyltransferase from Clostridium beijerinckii (strain ATCC 51743 / NCIMB 8052) (Clostridium acetobutylicum).